A 487-amino-acid chain; its full sequence is Probable cytochrome P450 513B1 (487 aa).

A helical transmembrane segment spans residues 1–18 (MNLLVLSVILAIIIYLIF). Residue Cys433 participates in heme binding.

The protein belongs to the cytochrome P450 family. Heme serves as cofactor.

The protein resides in the membrane. This is Probable cytochrome P450 513B1 (cyp513B1) from Dictyostelium discoideum (Social amoeba).